The sequence spans 124 residues: Secreted RxLR effector protein 49 (124 aa).

The N-terminal stretch at methionine 1–alanine 22 is a signal peptide. A RxLR motif is present at residues arginine 57–arginine 60.

Belongs to the RxLR effector family.

The protein localises to the secreted. It localises to the host cytoplasm. It is found in the host nucleus. Functionally, effector that acts as a broad suppressor of cell death to interrupt plant immunity. Inhibits cell death induced by cell death-inducing proteins, including the PAMP elicitor INF1 from P.infestans. The chain is Secreted RxLR effector protein 49 from Plasmopara viticola (Downy mildew of grapevine).